The sequence spans 321 residues: XylDLEGF operon transcriptional activator 1 (321 aa).

One can recognise an HTH araC/xylS-type domain in the interval 214 to 315; the sequence is ERVVQFIEEN…GELPSDTLRQ (102 aa). 2 consecutive DNA-binding regions (H-T-H motif) follow at residues 231–252 and 282–305; these read ERLA…EKHA and ITEI…RSAF.

Its subcellular location is the cytoplasm. Its function is as follows. Regulatory protein of the TOL plasmid xyl operons. XylS activates the xylXYZLTEGFJQKIH operon required for the degradation of toluene, m-xylene and p-xylene. In Pseudomonas putida (Arthrobacter siderocapsulatus), this protein is XylDLEGF operon transcriptional activator 1 (xylS1).